Here is a 320-residue protein sequence, read N- to C-terminus: Zinc finger protein 330 (320 aa).

Residues 1-23 (MPKKKTGARKKAENRREREKQLR) are disordered. A Nuclear localization signal motif is present at residues 3–11 (KKKTGARKK). The span at 10-22 (KKAENRREREKQL) shows a compositional bias: basic and acidic residues. C4-type zinc fingers lie at residues 42–58 (CDKC…CYFC), 67–104 (CAQC…CDFC), 129–149 (CVEC…CSFC), and 175–189 (CVSC…CLRC). A disordered region spans residues 206-320 (EKGKQPPCPK…GYAHYEEQEN (115 aa)). Basic and acidic residues predominate over residues 216–225 (CGHETQETKD). The span at 269–285 (DEEEDEYEAEDDEEEED) shows a compositional bias: acidic residues. Serine 291 is modified (phosphoserine).

The protein belongs to the NOA36 family. As to expression, widely expressed. Higher expression seen in heart and skeletal muscle.

The protein resides in the nucleus. The protein localises to the nucleolus. It localises to the chromosome. It is found in the centromere. This Homo sapiens (Human) protein is Zinc finger protein 330 (ZNF330).